A 137-amino-acid polypeptide reads, in one-letter code: Small ribosomal subunit protein uS9 (137 aa).

The span at 106–117 shows a compositional bias: basic and acidic residues; the sequence is KTEGYLTRDPRA. The interval 106–137 is disordered; the sequence is KTEGYLTRDPRAKERRKYGLRKARKAPQYSKR. Positions 118 to 137 are enriched in basic residues; the sequence is KERRKYGLRKARKAPQYSKR.

It belongs to the universal ribosomal protein uS9 family.

This Thermosynechococcus vestitus (strain NIES-2133 / IAM M-273 / BP-1) protein is Small ribosomal subunit protein uS9.